The following is a 118-amino-acid chain: NADH-quinone oxidoreductase subunit A 2 (118 aa).

3 consecutive transmembrane segments (helical) span residues 5 to 25, 62 to 82, and 87 to 107; these read YLPI…SLIF, IIAM…PWAV, and LGMF…VGYI.

It belongs to the complex I subunit 3 family. NDH-1 is composed of 14 different subunits. Subunits NuoA, H, J, K, L, M, N constitute the membrane sector of the complex.

It localises to the cell inner membrane. The enzyme catalyses a quinone + NADH + 5 H(+)(in) = a quinol + NAD(+) + 4 H(+)(out). Its function is as follows. NDH-1 shuttles electrons from NADH, via FMN and iron-sulfur (Fe-S) centers, to quinones in the respiratory chain. The immediate electron acceptor for the enzyme in this species is believed to be ubiquinone. Couples the redox reaction to proton translocation (for every two electrons transferred, four hydrogen ions are translocated across the cytoplasmic membrane), and thus conserves the redox energy in a proton gradient. The polypeptide is NADH-quinone oxidoreductase subunit A 2 (Geotalea uraniireducens (strain Rf4) (Geobacter uraniireducens)).